Consider the following 1046-residue polypeptide: Suppressor of Mek1 (1046 aa).

The WH1 domain maps to 1–101 (MEPLRKRVKV…QDIWENILQY (101 aa)). The disordered stretch occupies residues 626 to 1046 (FESPETSCNN…SSPTPSELHV (421 aa)). Acidic residues predominate over residues 665–689 (IDEEEEEAYFNRDDDSEDSDDEDEL). The segment covering 695–713 (NNNNNNNNNNKQICTNNEN) has biased composition (low complexity). Basic and acidic residues predominate over residues 714-727 (NMEKNDDNIEKDNE). Acidic residues predominate over residues 743 to 752 (YEDEDDEDDE). Residues 753-783 (INKSVESDDIVEKHEIIDKNEKKDEIMKENN) are compositionally biased toward basic and acidic residues. Residues 784 to 803 (DSDNDDNDNNDNDNDNDNNS) are compositionally biased toward acidic residues. Residues 804–820 (DIENKNHLNNNGNNENN) show a composition bias toward low complexity. Basic and acidic residues-rich tracts occupy residues 826–855 (VQDK…KENL) and 862–876 (EKVK…KKEN). Residues 889–905 (SNNSNNNNNNNNNNSNN) show a composition bias toward low complexity. Residues 909–935 (GDNRKTTPKRKLDYEKNESVVSKKIDK) are compositionally biased toward basic and acidic residues. Low complexity predominate over residues 958-995 (NNNNSNNNNNNNNNNNNNNNNNNNNNNNNNNNNNNNQN). Over residues 996–1011 (DENELSSASEEEEEQL) the composition is skewed to acidic residues. Residues 1003–1022 (ASEEEEEQLENGKHIKKFKR) carry the Nuclear localization signal motif. Over residues 1028–1038 (NNSSNNSNNSS) the composition is skewed to low complexity.

This sequence belongs to the SMEK family. As to quaternary structure, interacts with ppp4c.

It localises to the cytoplasm. The protein localises to the cell cortex. Its subcellular location is the nucleus. Its function is as follows. Suppresses MEK1 null cell polarity, chemotaxis, and gene expression defects. Required for proper cytokinesis during vegetative growth, timely exit from the mound stage during development, and myosin II assembly. May be a regulatory subunit of serine/threonine-protein phosphatase 4 (PP4) and may control localization of PP4 to the nucleus. Involved in the regulation of some ppp4c functions, such as developmental progression, chemotaxis, expression of stress response genes and cell movement. The sequence is that of Suppressor of Mek1 (smkA) from Dictyostelium discoideum (Social amoeba).